A 423-amino-acid chain; its full sequence is Imidazolonepropionase (423 aa).

The Fe(3+) site is built by H87 and H89. The Zn(2+) site is built by H87 and H89. 3 residues coordinate 4-imidazolone-5-propanoate: R96, Y159, and H192. Y159 lines the N-formimidoyl-L-glutamate pocket. H257 contributes to the Fe(3+) binding site. Residue H257 participates in Zn(2+) binding. E260 contacts 4-imidazolone-5-propanoate. D331 provides a ligand contact to Fe(3+). Position 331 (D331) interacts with Zn(2+). The N-formimidoyl-L-glutamate site is built by N333 and G335. S336 lines the 4-imidazolone-5-propanoate pocket.

Belongs to the metallo-dependent hydrolases superfamily. HutI family. Zn(2+) is required as a cofactor. Fe(3+) serves as cofactor.

It localises to the cytoplasm. It carries out the reaction 4-imidazolone-5-propanoate + H2O = N-formimidoyl-L-glutamate. The protein operates within amino-acid degradation; L-histidine degradation into L-glutamate; N-formimidoyl-L-glutamate from L-histidine: step 3/3. Its function is as follows. Catalyzes the hydrolytic cleavage of the carbon-nitrogen bond in imidazolone-5-propanoate to yield N-formimidoyl-L-glutamate. It is the third step in the universal histidine degradation pathway. The chain is Imidazolonepropionase from Porphyromonas gingivalis (strain ATCC BAA-308 / W83).